A 377-amino-acid chain; its full sequence is Cell division protein FtsZ (377 aa).

The segment covering 1–16 (MDSIVDDAIDEAEDMG) has biased composition (acidic residues). The segment at 1–33 (MDSIVDDAIDEAEDMGDGSAEVGGPTDINRSGT) is disordered. GTP contacts are provided by residues 57 to 61 (GAGGN), 144 to 146 (GTG), E175, R179, and D222.

Belongs to the FtsZ family. Homodimer. Polymerizes to form a dynamic ring structure in a strictly GTP-dependent manner. Interacts directly with several other division proteins.

The protein resides in the cytoplasm. In terms of biological role, essential cell division protein that forms a contractile ring structure (Z ring) at the future cell division site. The regulation of the ring assembly controls the timing and the location of cell division. One of the functions of the FtsZ ring is to recruit other cell division proteins to the septum to produce a new cell wall between the dividing cells. Binds GTP and shows GTPase activity. This chain is Cell division protein FtsZ, found in Haloferax mediterranei (strain ATCC 33500 / DSM 1411 / JCM 8866 / NBRC 14739 / NCIMB 2177 / R-4) (Halobacterium mediterranei).